The primary structure comprises 30 residues: Cysteine-rich venom protein okinavin (30 aa).

Residues 1 to 30 form a disordered region; the sequence is SVDFDSESPRKPXIQNEIVDLHNPLRRXVN.

It belongs to the CRISP family. Post-translationally, contains 8 disulfide bonds. In terms of tissue distribution, expressed by the venom gland.

Its subcellular location is the secreted. Its function is as follows. Inhibits calcium-activated potassium channels (KCa), voltage-gated potassium channel (Kv), and the calcium release channel/ryanodine receptor (RyR). This is Cysteine-rich venom protein okinavin from Ovophis okinavensis (Ryukyu Island pit viper).